The chain runs to 434 residues: Enolase (434 aa).

Q167 contacts (2R)-2-phosphoglycerate. E209 (proton donor) is an active-site residue. 3 residues coordinate Mg(2+): D246, E291, and D318. The (2R)-2-phosphoglycerate site is built by K343, R372, S373, and K394. Residue K343 is the Proton acceptor of the active site.

It belongs to the enolase family. As to quaternary structure, component of the RNA degradosome, a multiprotein complex involved in RNA processing and mRNA degradation. Mg(2+) is required as a cofactor.

The protein localises to the cytoplasm. Its subcellular location is the secreted. It is found in the cell surface. The catalysed reaction is (2R)-2-phosphoglycerate = phosphoenolpyruvate + H2O. It functions in the pathway carbohydrate degradation; glycolysis; pyruvate from D-glyceraldehyde 3-phosphate: step 4/5. Functionally, catalyzes the reversible conversion of 2-phosphoglycerate (2-PG) into phosphoenolpyruvate (PEP). It is essential for the degradation of carbohydrates via glycolysis. This Buchnera aphidicola subsp. Schizaphis graminum (strain Sg) protein is Enolase.